We begin with the raw amino-acid sequence, 218 residues long: Thiopurine S-methyltransferase (218 aa).

The S-adenosyl-L-methionine site is built by W10, L45, E66, and R123.

Belongs to the class I-like SAM-binding methyltransferase superfamily. TPMT family.

It is found in the cytoplasm. The catalysed reaction is S-adenosyl-L-methionine + a thiopurine = S-adenosyl-L-homocysteine + a thiopurine S-methylether.. In Azotobacter vinelandii (strain DJ / ATCC BAA-1303), this protein is Thiopurine S-methyltransferase.